The following is a 1263-amino-acid chain: Multidrug resistance protein sirA (1263 aa).

Positions 1-21 (MAEPESEKPSSAQGGGLPSSD) are disordered. Helical transmembrane passes span 57–77 (LISAFFAAVSGAMFPLLILFI), 104–124 (IALYIVYLFLGQLVSVFIFTN), 179–199 (KIGLFVSACSCFVASYAIGFV), and 206–226 (FILTSTVVAITGVMIIMSGFM). The ABC transmembrane type-1 1 domain occupies 57-347 (LISAFFAAVS…VGPHLQAMSL (291 aa)). N-linked (GlcNAc...) asparagine glycosylation occurs at Asn-232. The next 2 helical transmembrane spans lie at 284 to 304 (VMGWMLAIMYGLIFLNYGLAI) and 318 to 338 (VGAIITVLMCLNIGAFLFGNV). In terms of domain architecture, ABC transporter 1 spans 380–625 (IEFRNVSHVY…EGLYQTFVRR (246 aa)). N-linked (GlcNAc...) asparagine glycosylation is present at Asn-384. 415 to 422 (GASGSGKS) contacts ATP. Residue Asn-469 is glycosylated (N-linked (GlcNAc...) asparagine). Residues 635 to 672 (PPHARITPAVDTPASPQHRLSEKTGSIYGQGESEAADK) form a disordered region. Transmembrane regions (helical) follow at residues 699 to 719 (VTGIASAVISGAVWPAHSVFF), 740 to 760 (FWAAMYVMLAFVQIASQGVQG), 817 to 839 (VFLGTLFSATATVLGGLILSLAV), 843 to 865 (LTLVTMGTIPIIIVAGYVRLKLV), 930 to 950 (LSEAVPLGCMSLGFWYGATLV), and 960 to 980 (FFIVVTAVIFGASSAGLVFAF). The ABC transmembrane type-1 2 domain maps to 699-986 (VTGIASAVIS…VFAFAPDFGK (288 aa)). In terms of domain architecture, ABC transporter 2 spans 1021-1259 (VDVSNVVFYY…RGSYYDSVNL (239 aa)). 1056–1063 (GGSGSGKS) is a binding site for ATP.

The protein belongs to the ABC transporter superfamily. ABCB family. Multidrug resistance exporter (TC 3.A.1.201) subfamily.

The protein resides in the cell membrane. It carries out the reaction ATP + H2O + xenobioticSide 1 = ADP + phosphate + xenobioticSide 2.. Functionally, sirodesmin transporter that provides the dual role of sirodesmin export and self-protection. Also provides tolerance to gliotoxin. The protein is Multidrug resistance protein sirA of Leptosphaeria maculans (Blackleg fungus).